We begin with the raw amino-acid sequence, 142 residues long: Nucleoside diphosphate kinase (142 aa).

ATP is bound by residues Lys-11, Phe-59, Arg-87, Thr-93, Arg-104, and Asn-114. The active-site Pros-phosphohistidine intermediate is His-117.

The protein belongs to the NDK family. Homotetramer. Mg(2+) is required as a cofactor.

It localises to the cytoplasm. It catalyses the reaction a 2'-deoxyribonucleoside 5'-diphosphate + ATP = a 2'-deoxyribonucleoside 5'-triphosphate + ADP. The enzyme catalyses a ribonucleoside 5'-diphosphate + ATP = a ribonucleoside 5'-triphosphate + ADP. Major role in the synthesis of nucleoside triphosphates other than ATP. The ATP gamma phosphate is transferred to the NDP beta phosphate via a ping-pong mechanism, using a phosphorylated active-site intermediate. The protein is Nucleoside diphosphate kinase of Pectobacterium atrosepticum (strain SCRI 1043 / ATCC BAA-672) (Erwinia carotovora subsp. atroseptica).